Reading from the N-terminus, the 118-residue chain is Large ribosomal subunit protein uL18 (118 aa).

The protein belongs to the universal ribosomal protein uL18 family. Part of the 50S ribosomal subunit; part of the 5S rRNA/L5/L18/L25 subcomplex. Contacts the 5S and 23S rRNAs.

In terms of biological role, this is one of the proteins that bind and probably mediate the attachment of the 5S RNA into the large ribosomal subunit, where it forms part of the central protuberance. This is Large ribosomal subunit protein uL18 from Rickettsia prowazekii (strain Madrid E).